A 320-amino-acid chain; its full sequence is ATP synthase gamma chain (320 aa).

Belongs to the ATPase gamma chain family. F-type ATPases have 2 components, CF(1) - the catalytic core - and CF(0) - the membrane proton channel. CF(1) has five subunits: alpha(3), beta(3), gamma(1), delta(1), epsilon(1). CF(0) has three main subunits: a, b and c.

It localises to the cell membrane. Produces ATP from ADP in the presence of a proton gradient across the membrane. The gamma chain is believed to be important in regulating ATPase activity and the flow of protons through the CF(0) complex. This Lactobacillus helveticus (strain DPC 4571) protein is ATP synthase gamma chain.